Reading from the N-terminus, the 336-residue chain is Flap endonuclease 1 (336 aa).

Positions Met-1–Arg-98 are N-domain. Mg(2+) is bound by residues Asp-27, Asp-80, Glu-151, Glu-153, Asp-172, Asp-174, and Asp-235. Positions Asp-115 to Gly-256 are I-domain. Residues Thr-328–Phe-336 are interaction with PCNA.

This sequence belongs to the XPG/RAD2 endonuclease family. FEN1 subfamily. Interacts with PCNA. PCNA stimulates the nuclease activity without altering cleavage specificity. The cofactor is Mg(2+).

Functionally, structure-specific nuclease with 5'-flap endonuclease and 5'-3' exonuclease activities involved in DNA replication and repair. During DNA replication, cleaves the 5'-overhanging flap structure that is generated by displacement synthesis when DNA polymerase encounters the 5'-end of a downstream Okazaki fragment. Binds the unpaired 3'-DNA end and kinks the DNA to facilitate 5' cleavage specificity. Cleaves one nucleotide into the double-stranded DNA from the junction in flap DNA, leaving a nick for ligation. Also involved in the base excision repair (BER) pathway. Acts as a genome stabilization factor that prevents flaps from equilibrating into structures that lead to duplications and deletions. Also possesses 5'-3' exonuclease activity on nicked or gapped double-stranded DNA. The chain is Flap endonuclease 1 from Archaeoglobus fulgidus (strain ATCC 49558 / DSM 4304 / JCM 9628 / NBRC 100126 / VC-16).